Consider the following 94-residue polypeptide: Long neurotoxin LNTX37 (94 aa).

Residues 1-21 (MKTLLLTLVVVTIMCLDLGYT) form the signal peptide. 5 cysteine pairs are disulfide-bonded: Cys24-Cys43, Cys36-Cys64, Cys49-Cys53, Cys68-Cys79, and Cys80-Cys85.

This sequence belongs to the three-finger toxin family. Long-chain subfamily. Type II alpha-neurotoxin sub-subfamily. As to expression, expressed by the venom gland.

It is found in the secreted. Functionally, binds with high affinity to muscular (alpha-1/CHRNA1) and neuronal (alpha-7/CHRNA7) nicotinic acetylcholine receptor (nAChR) and inhibits acetylcholine from binding to the receptor, thereby impairing neuromuscular and neuronal transmission. This is Long neurotoxin LNTX37 from Ophiophagus hannah (King cobra).